The primary structure comprises 101 residues: uncharacterized protein (101 aa).

Its subcellular location is the mitochondrion. This is an uncharacterized protein from Arabidopsis thaliana (Mouse-ear cress).